The following is a 156-amino-acid chain: ATP synthase subunit b (156 aa).

The chain crosses the membrane as a helical span at residues 7–26; that stretch reads FIGQMVAFAIFIYLTYRYVW.

The protein belongs to the ATPase B chain family. In terms of assembly, F-type ATPases have 2 components, F(1) - the catalytic core - and F(0) - the membrane proton channel. F(1) has five subunits: alpha(3), beta(3), gamma(1), delta(1), epsilon(1). F(0) has three main subunits: a(1), b(2) and c(10-14). The alpha and beta chains form an alternating ring which encloses part of the gamma chain. F(1) is attached to F(0) by a central stalk formed by the gamma and epsilon chains, while a peripheral stalk is formed by the delta and b chains.

The protein localises to the cell inner membrane. Functionally, f(1)F(0) ATP synthase produces ATP from ADP in the presence of a proton or sodium gradient. F-type ATPases consist of two structural domains, F(1) containing the extramembraneous catalytic core and F(0) containing the membrane proton channel, linked together by a central stalk and a peripheral stalk. During catalysis, ATP synthesis in the catalytic domain of F(1) is coupled via a rotary mechanism of the central stalk subunits to proton translocation. Component of the F(0) channel, it forms part of the peripheral stalk, linking F(1) to F(0). This is ATP synthase subunit b from Cellvibrio japonicus (strain Ueda107) (Pseudomonas fluorescens subsp. cellulosa).